The following is a 286-amino-acid chain: uncharacterized protein (286 aa).

7 helical membrane-spanning segments follow: residues 30-50 (LTFM…LTVQ), 68-88 (LSTI…VTAF), 99-119 (WFWA…GILL), 136-156 (IVYA…LSAL), 169-189 (LFHI…LSFI), 205-225 (IIPG…VYFV), and 254-274 (SALF…YFIL).

The protein localises to the cell membrane. This is an uncharacterized protein from Mycoplasma genitalium (strain ATCC 33530 / DSM 19775 / NCTC 10195 / G37) (Mycoplasmoides genitalium).